Consider the following 139-residue polypeptide: Putative pre-16S rRNA nuclease (139 aa).

The protein belongs to the YqgF nuclease family.

The protein localises to the cytoplasm. Its function is as follows. Could be a nuclease involved in processing of the 5'-end of pre-16S rRNA. The polypeptide is Putative pre-16S rRNA nuclease (Dictyoglomus thermophilum (strain ATCC 35947 / DSM 3960 / H-6-12)).